The primary structure comprises 343 residues: Calcium/calmodulin-dependent protein kinase type 1B (343 aa).

In terms of domain architecture, Protein kinase spans 15 to 270 (YEIREKLGSG…CQQALQHLWI (256 aa)). ATP is bound by residues 21 to 29 (LGSGAFSEV) and K44. D136 serves as the catalytic Proton acceptor. Positions 290 to 311 (KNFARTHWKRAFNATSFLRHIR) are calmodulin-binding. A disordered region spans residues 314-343 (GQSPEGEEASRQGMTRHSHPGLGTSQSPKW). S338 carries the phosphoserine modification.

This sequence belongs to the protein kinase superfamily. CAMK Ser/Thr protein kinase family. CaMK subfamily. Isoform 1 and isoform 2 are phosphorylated by CAMKK1. In terms of tissue distribution, isoform 1 is expressed in liver, heart, lung, kidney, spleen and testis. Isoform 2 is predominantly expressed in cerebrum and cerebellum.

Its subcellular location is the cytoplasm. The protein resides in the nucleus. The catalysed reaction is L-seryl-[protein] + ATP = O-phospho-L-seryl-[protein] + ADP + H(+). It carries out the reaction L-threonyl-[protein] + ATP = O-phospho-L-threonyl-[protein] + ADP + H(+). With respect to regulation, activated by Ca(2+)/calmodulin. Must be phosphorylated to be maximally active. Activated by CAMKK1. Functionally, calcium/calmodulin-dependent protein kinase belonging to a proposed calcium-triggered signaling cascade. In vitro, isoform 1 and isoform 2 phosphorylate CREB1, SYN1/synapsin I. Phosphorylates and activates CAMK1. This is Calcium/calmodulin-dependent protein kinase type 1B (Pnck) from Rattus norvegicus (Rat).